The chain runs to 269 residues: MNASRIAAAGASTLTRRIIPCLDVTAGRVVKGVNFVNLTDAGDPVEIARRYNEQGADELTFLDITATSDGHDLILPIIEQVASQVFIPLTVGGGVRQVSDVQRLLNAGADKISINSAAVANPELVRAAADYHGSQCIVVAIDARRSSAEGEPARWEVFTHGGRKATGLDAVAWARRMAAYGAGEILLTSMDRDGTKSGFDLELTRAVSDAVPVPVIASGGVGNLQHLADGVTTGRASAVLAASIFHFGQHTVRECKQYMAERGIAVRLT.

Residues aspartate 23 and aspartate 142 contribute to the active site.

It belongs to the HisA/HisF family. Heterodimer of HisH and HisF.

It localises to the cytoplasm. It catalyses the reaction 5-[(5-phospho-1-deoxy-D-ribulos-1-ylimino)methylamino]-1-(5-phospho-beta-D-ribosyl)imidazole-4-carboxamide + L-glutamine = D-erythro-1-(imidazol-4-yl)glycerol 3-phosphate + 5-amino-1-(5-phospho-beta-D-ribosyl)imidazole-4-carboxamide + L-glutamate + H(+). It participates in amino-acid biosynthesis; L-histidine biosynthesis; L-histidine from 5-phospho-alpha-D-ribose 1-diphosphate: step 5/9. In terms of biological role, IGPS catalyzes the conversion of PRFAR and glutamine to IGP, AICAR and glutamate. The HisF subunit catalyzes the cyclization activity that produces IGP and AICAR from PRFAR using the ammonia provided by the HisH subunit. This Bordetella parapertussis (strain 12822 / ATCC BAA-587 / NCTC 13253) protein is Imidazole glycerol phosphate synthase subunit HisF.